The chain runs to 383 residues: Large ribosomal subunit protein uL2m (383 aa).

Disordered stretches follow at residues 97–122 and 322–357; these read FPKK…GGGH and MNAN…YKTR. 2 stretches are compositionally biased toward basic residues: residues 106–122 and 330–340; these read GRNH…GGGH and GGGRGKSKGNR.

This sequence belongs to the universal ribosomal protein uL2 family. In terms of assembly, component of the mitochondrial large ribosomal subunit (mt-LSU). Mature N.crassa 74S mitochondrial ribosomes consist of a small (37S) and a large (54S) subunit. The 37S small subunit contains a 16S ribosomal RNA (16S mt-rRNA) and 32 different proteins. The 54S large subunit contains a 23S rRNA (23S mt-rRNA) and 42 different proteins.

It localises to the mitochondrion. Component of the mitochondrial ribosome (mitoribosome), a dedicated translation machinery responsible for the synthesis of mitochondrial genome-encoded proteins, including at least some of the essential transmembrane subunits of the mitochondrial respiratory chain. The mitoribosomes are attached to the mitochondrial inner membrane and translation products are cotranslationally integrated into the membrane. The chain is Large ribosomal subunit protein uL2m (rml2) from Neurospora crassa (strain ATCC 24698 / 74-OR23-1A / CBS 708.71 / DSM 1257 / FGSC 987).